A 389-amino-acid chain; its full sequence is S-adenosylmethionine synthase (389 aa).

ATP is bound at residue His15. A Mg(2+)-binding site is contributed by Asp17. Glu43 lines the K(+) pocket. Residues Glu56 and Gln99 each contribute to the L-methionine site. The tract at residues 99-109 (QSPDIAQGVNE) is flexible loop. ATP-binding positions include 166–168 (DAK), 234–235 (RF), Asp243, 249–250 (RK), Ala266, and Lys270. Asp243 lines the L-methionine pocket. Lys274 contributes to the L-methionine binding site.

This sequence belongs to the AdoMet synthase family. As to quaternary structure, homotetramer; dimer of dimers. Mg(2+) is required as a cofactor. K(+) serves as cofactor.

It is found in the cytoplasm. It carries out the reaction L-methionine + ATP + H2O = S-adenosyl-L-methionine + phosphate + diphosphate. It participates in amino-acid biosynthesis; S-adenosyl-L-methionine biosynthesis; S-adenosyl-L-methionine from L-methionine: step 1/1. Its function is as follows. Catalyzes the formation of S-adenosylmethionine (AdoMet) from methionine and ATP. The overall synthetic reaction is composed of two sequential steps, AdoMet formation and the subsequent tripolyphosphate hydrolysis which occurs prior to release of AdoMet from the enzyme. The sequence is that of S-adenosylmethionine synthase from Neisseria gonorrhoeae (strain ATCC 700825 / FA 1090).